We begin with the raw amino-acid sequence, 85 residues long: Small ribosomal subunit protein uS17 (85 aa).

Belongs to the universal ribosomal protein uS17 family. As to quaternary structure, part of the 30S ribosomal subunit.

In terms of biological role, one of the primary rRNA binding proteins, it binds specifically to the 5'-end of 16S ribosomal RNA. The polypeptide is Small ribosomal subunit protein uS17 (Mesoplasma florum (strain ATCC 33453 / NBRC 100688 / NCTC 11704 / L1) (Acholeplasma florum)).